A 287-amino-acid polypeptide reads, in one-letter code: Probable aquaporin PIP1-4 (287 aa).

Position 1 is an N-acetylmethionine (Met1). Positions 1–36 (MEGKEEDVRVGANKFPERQPIGTSAQSTDKDYKEPP) are disordered. The Cytoplasmic segment spans residues 1–55 (MEGKEEDVRVGANKFPERQPIGTSAQSTDKDYKEPPPAPLFEPGELSSWSFYRAG). A helical membrane pass occupies residues 56-76 (IAEFIATFLFLYITVLTVMGV). The Extracellular portion of the chain corresponds to 77 to 92 (KRAPNMCASVGIQGIA). Residues 93 to 113 (WAFGGMIFALVYCTAGISGGH) form a helical membrane-spanning segment. Over 114–133 (INPAVTFGLFLARKLSLTRA) the chain is Cytoplasmic. Residues 115 to 117 (NPA) carry the NPA 1 motif. The helical transmembrane segment at 134–154 (VFYMIMQCLGAICGAGVVKGF) threads the bilayer. The Extracellular segment spans residues 155–175 (QPTPYQTLGGGANTVAHGYTK). Residues 176 to 196 (GSGLGAEIIGTFVLVYTVFSA) traverse the membrane as a helical segment. Topologically, residues 197–209 (TDAKRSARDSHVP) are cytoplasmic. The chain crosses the membrane as a helical span at residues 210 to 230 (ILAPLPIGFAVFLVHLATIPI). At 231–257 (TGTGINPARSLGAAIIYNKDHSWDDHW) the chain is on the extracellular side. The NPA 2 motif lies at 236-238 (NPA). The helical transmembrane segment at 258–278 (IFWVGPFIGAALAALYHQIVI) threads the bilayer. Over 279–287 (RAIPFKSKS) the chain is Cytoplasmic. Position 285 is a phosphoserine (Ser285).

The protein belongs to the MIP/aquaporin (TC 1.A.8) family. PIP (TC 1.A.8.11) subfamily. Predominantly expressed in roots and green siliques. Also expressed above ground and in flower buds.

Its subcellular location is the cell membrane. In terms of biological role, aquaporins facilitate the transport of water and small neutral solutes across cell membranes. The protein is Probable aquaporin PIP1-4 (PIP1.4) of Arabidopsis thaliana (Mouse-ear cress).